The following is a 553-amino-acid chain: Phospholipase B (553 aa).

Residues 1–35 (MIRFGNPSSSDKRRQRCRSWYWGGLLLLWAVAETR) form the signal peptide. 3 N-linked (GlcNAc...) asparagine glycosylation sites follow: Asn-313, Asn-416, and Asn-531.

It belongs to the phospholipase B-like family. In terms of tissue distribution, expressed by the venom gland.

The protein resides in the secreted. May cause hemolysis or may be involved in protein folding and translation. The chain is Phospholipase B from Crotalus adamanteus (Eastern diamondback rattlesnake).